The sequence spans 197 residues: Adenylate kinase (197 aa).

16–21 (GAGKGT) contributes to the ATP binding site. An NMP region spans residues 36 to 65 (STGDILRDHVARGTALGQRVKPILDAGQLV). Residues T37, R42, 63 to 65 (QLV), 90 to 93 (GFPR), and Q97 contribute to the AMP site. The segment at 131–147 (ERGRQAALRGEPVRSDD) is LID. R132 is a binding site for ATP. AMP-binding residues include R144 and R155. G183 is an ATP binding site.

Belongs to the adenylate kinase family. Monomer.

It is found in the cytoplasm. It carries out the reaction AMP + ATP = 2 ADP. It functions in the pathway purine metabolism; AMP biosynthesis via salvage pathway; AMP from ADP: step 1/1. Functionally, catalyzes the reversible transfer of the terminal phosphate group between ATP and AMP. Plays an important role in cellular energy homeostasis and in adenine nucleotide metabolism. The polypeptide is Adenylate kinase (Deinococcus geothermalis (strain DSM 11300 / CIP 105573 / AG-3a)).